Consider the following 354-residue polypeptide: GDSL esterase/lipase At3g09930 (354 aa).

A signal peptide spans 1–24; the sequence is MELPKLLISLFLFSFSSFFLGAES. Ser46 (nucleophile) is an active-site residue. Residues Asn133, Asn233, Asn237, Asn256, and Asn300 are each glycosylated (N-linked (GlcNAc...) asparagine). Catalysis depends on residues Asp329 and His332.

It belongs to the 'GDSL' lipolytic enzyme family.

The protein resides in the secreted. The polypeptide is GDSL esterase/lipase At3g09930 (Arabidopsis thaliana (Mouse-ear cress)).